Reading from the N-terminus, the 132-residue chain is Pollen allergen Phl p 6 (132 aa).

The first 22 residues, 1–22 (MVAMFLAVAVVLGLATSPTAEG), serve as a signal peptide directing secretion.

This sequence belongs to the Poa p IX/Phl p VI allergen family.

This Phleum pratense (Common timothy) protein is Pollen allergen Phl p 6 (PHLPVI).